The primary structure comprises 221 residues: Cysteine-rich venom protein (221 aa).

Glycine 1 is a signal peptide. The SCP domain occupies 21–148 (DLHNSLRRSV…EYKYFYVCQY (128 aa)). 8 cysteine pairs are disulfide-bonded: cysteine 57-cysteine 135, cysteine 74-cysteine 149, cysteine 130-cysteine 146, cysteine 168-cysteine 175, cysteine 171-cysteine 180, cysteine 184-cysteine 216, cysteine 193-cysteine 210, and cysteine 201-cysteine 214. Residues 184 to 216 (CTHEDKFTNCKDLVKQGCNNNYLKTNCPASCSC) enclose the ShKT domain.

Belongs to the CRISP family. Expressed by the venom gland.

It localises to the secreted. Its function is as follows. Blocks contraction of smooth muscle elicited by high potassium-induced depolarization, but does not block caffeine-stimulated contraction. May target voltage-gated calcium channels in smooth muscle. This Vipera nikolskii (Nikolsky's adder) protein is Cysteine-rich venom protein.